We begin with the raw amino-acid sequence, 490 residues long: Homoserine O-acetyltransferase (490 aa).

Positions 47-353 (NAILVCHALT…SQFGHDAFLI (307 aa)) constitute an AB hydrolase-1 domain. Catalysis depends on serine 152, which acts as the Nucleophile. Arginine 221 contacts substrate. Residues aspartate 315 and histidine 348 contribute to the active site. A substrate-binding site is contributed by aspartate 349. CBS domains are found at residues 375–432 (MNTQ…YTSL) and 436–490 (MSSQ…GRGP).

This sequence belongs to the AB hydrolase superfamily. MetX family. In terms of assembly, homodimer.

The protein localises to the cytoplasm. The catalysed reaction is L-homoserine + acetyl-CoA = O-acetyl-L-homoserine + CoA. Its pathway is amino-acid biosynthesis; L-methionine biosynthesis via de novo pathway; O-acetyl-L-homoserine from L-homoserine: step 1/1. Transfers an acetyl group from acetyl-CoA to L-homoserine, forming acetyl-L-homoserine. This chain is Homoserine O-acetyltransferase, found in Methanosphaerula palustris (strain ATCC BAA-1556 / DSM 19958 / E1-9c).